A 208-amino-acid polypeptide reads, in one-letter code: Thymidylate kinase (208 aa).

10–17 (GPDGSGKT) is an ATP binding site.

It belongs to the thymidylate kinase family.

It carries out the reaction dTMP + ATP = dTDP + ADP. Phosphorylation of dTMP to form dTDP in both de novo and salvage pathways of dTTP synthesis. The chain is Thymidylate kinase from Listeria welshimeri serovar 6b (strain ATCC 35897 / DSM 20650 / CCUG 15529 / CIP 8149 / NCTC 11857 / SLCC 5334 / V8).